We begin with the raw amino-acid sequence, 71 residues long: MPIIKVRENEPFDVALRRFKRSCEKAGILAEIRRREFYEKPTTERKRAKASAVKRLAKKLTRENARRIRMY.

It belongs to the bacterial ribosomal protein bS21 family.

This is Small ribosomal subunit protein bS21 from Buchnera aphidicola subsp. Acyrthosiphon pisum (strain 5A).